The sequence spans 66 residues: Small ribosomal subunit protein bS21 (66 aa).

Belongs to the bacterial ribosomal protein bS21 family.

The chain is Small ribosomal subunit protein bS21 from Rickettsia akari (strain Hartford).